The chain runs to 508 residues: MTEPTQTQPAVTADENQIIAERREKLRALREQGVAYPNDFRPEHHAADLQAKFADSDKAALEANPVEVSVAGRMMLKRVMGKASFATVQDGSGQIQFFVTPNDVGADTYDAFKKWDLGDIVAARGVLFRTNKGELSVQCKELRLLSKALRPLPDKFHGLSDQEMRYRQRYVDLIVTPETRDTFRARTKTIASIRKFMDNADFMEVETPMLHPIPGGAAAKPFVTHHNALDMQMFLRIAPELYLKRLIVGGFERVFEINRNFRNEGVSPRHNPEFTMMEFYAAYTDYRWLMDFTEQLIRQAAIDALGTATIQYQGRELDLAKPFHRLTITQAIQKYAPDYTDGQLSDDAFLRTELKRFGVDVSQPAFLNAGIGALQLALFEETAEAQLWEPTFIIDYPVEVSPLARASDTVPGITERFELFMTGREIANGFSELNDPEDQAARFKKQVEQKDAGDEEAMFFDADYIRALEYGMPPTGGCGIGIDRLVMLLTDSPTIRDVLLFPHLRRED.

Mg(2+) is bound by residues glutamate 418 and glutamate 425.

The protein belongs to the class-II aminoacyl-tRNA synthetase family. Homodimer. It depends on Mg(2+) as a cofactor.

The protein resides in the cytoplasm. The enzyme catalyses tRNA(Lys) + L-lysine + ATP = L-lysyl-tRNA(Lys) + AMP + diphosphate. This is Lysine--tRNA ligase from Burkholderia cenocepacia (strain HI2424).